A 306-amino-acid polypeptide reads, in one-letter code: Ribonuclease Z (306 aa).

Histidine 63, histidine 65, aspartate 67, histidine 68, histidine 141, aspartate 211, and histidine 269 together coordinate Zn(2+). Aspartate 67 (proton acceptor) is an active-site residue.

Belongs to the RNase Z family. As to quaternary structure, homodimer. It depends on Zn(2+) as a cofactor.

It carries out the reaction Endonucleolytic cleavage of RNA, removing extra 3' nucleotides from tRNA precursor, generating 3' termini of tRNAs. A 3'-hydroxy group is left at the tRNA terminus and a 5'-phosphoryl group is left at the trailer molecule.. In terms of biological role, zinc phosphodiesterase, which displays some tRNA 3'-processing endonuclease activity. Probably involved in tRNA maturation, by removing a 3'-trailer from precursor tRNA. This Staphylococcus aureus (strain Mu3 / ATCC 700698) protein is Ribonuclease Z.